The following is a 146-amino-acid chain: Transcription antitermination protein NusB (146 aa).

This sequence belongs to the NusB family.

In terms of biological role, involved in transcription antitermination. Required for transcription of ribosomal RNA (rRNA) genes. Binds specifically to the boxA antiterminator sequence of the ribosomal RNA (rrn) operons. The chain is Transcription antitermination protein NusB from Solibacter usitatus (strain Ellin6076).